Consider the following 335-residue polypeptide: D-arabinose 1-dehydrogenase (335 aa).

The active-site Proton donor is Tyr58. His124 is a substrate binding site. Ser221–Ala287 is a binding site for NAD(+).

The protein belongs to the aldo/keto reductase family. Aldo/keto reductase 2 subfamily.

It catalyses the reaction D-arabinose + NAD(+) = D-arabinono-1,4-lactone + NADH + H(+). This is D-arabinose 1-dehydrogenase (ARA2) from Saccharomyces cerevisiae (strain ATCC 204508 / S288c) (Baker's yeast).